A 425-amino-acid polypeptide reads, in one-letter code: Probable threonylcarbamoyladenosine tRNA methylthiotransferase (425 aa).

Positions 2-110 (VKIYIENYGC…IIQAVEYALR (109 aa)) constitute an MTTase N-terminal domain. The [4Fe-4S] cluster site is built by Cys-11, Cys-47, Cys-76, Cys-148, Cys-152, and Cys-155. Residues 133–363 (LSPRTVYFIV…HRIRLQISYE (231 aa)) enclose the Radical SAM core domain. The 60-residue stretch at 366 to 425 (QKYIGKKVEVLIHGEGKKGNVDAVTMNYKHVILPFGNSGEFRIAEIKNATSTYLLGEVMS) folds into the TRAM domain.

It belongs to the methylthiotransferase family. CDKAL1 subfamily. [4Fe-4S] cluster serves as cofactor.

It carries out the reaction N(6)-L-threonylcarbamoyladenosine(37) in tRNA + (sulfur carrier)-SH + AH2 + 2 S-adenosyl-L-methionine = 2-methylsulfanyl-N(6)-L-threonylcarbamoyladenosine(37) in tRNA + (sulfur carrier)-H + 5'-deoxyadenosine + L-methionine + A + S-adenosyl-L-homocysteine + 2 H(+). Functionally, catalyzes the methylthiolation of N6-threonylcarbamoyladenosine (t(6)A), leading to the formation of 2-methylthio-N6-threonylcarbamoyladenosine (ms(2)t(6)A) at position 37 in tRNAs that read codons beginning with adenine. This Pyrococcus abyssi (strain GE5 / Orsay) protein is Probable threonylcarbamoyladenosine tRNA methylthiotransferase.